The sequence spans 865 residues: MNDETNKNNSNINNNNNNNNSSALVLVDNVRYDKAIIRPLPTKAYYGLEYPANVQNADKAIESVGGLSKISNVIKSREKEYLQLKFRPNNPTCKPTFGTKSPTCHLLLRVRPNKQQTQTQTQTQTQDNNEEMNSPKPTIQSPKTTSRSKQQQQQQQPQENEKFDATIIALVPSTIRFDGLCDFQYLIKSDNNNTKSESDNVNDSSSSSSSKTVPITKQKDQYYVQQYSDNNEIMKDEPMNLIPPLFSRIDFPQNYLFKANPNAQFDKTSKQFVFAKQTTRKATGHAKFNNVIPVAPQELPKVFGVNELMKKTRDILVALFEKRPIWLYISLLDKVQKEGGLVAHTKRVLPSLAFNFVDGPWRKCWVKLGFDPRIHPETSQYQTIDFRISEQDNHYPSNQPSKNNNNNNNNKDSIKNKEKDNSNKEDKEHKEDKEDKQEEDKENNETDNNEKSNKIDEESRDNTKNTDGGEDKNNKNIVEKKNNNEKGDDNNIDDGDEIMKNKEDENGEGNNNNNNNNNNKEGVSEVQKLGRGHKDEKLIIQNGVSGETKINPSRKKLLDINTFEFNSQLPTSSSSLSSSSTQPLLLLKGGSGDDAQDFYQAPVYDYTFKTAPSMLSNLYQIIDIEEPSIAEYWASVKIQSTCQKKFGWFSESSFREGLERMKARFGVMDNKMRFKSRSNTSTATTTSTKSTQPKSTQPKEPKLKSTQPKEPRPKGRPRKYAIKKDKNNNNNVDNNNDDSIDKMDLDDEETTTKSNKQNKEIDESLKNDTLAQMEKDNEYLHGKNEEIEIEIDGGVVGGFDYDDDDDDEDKPFELLDDFDGTDNIQMKQIDDFFGTQTNEDSEEDESDFDEEEEEEEEDFEFEESE.

5 disordered regions span residues 1–21 (MNDE…NNNS), 111–163 (RPNK…NEKF), 191–215 (NNNT…TVPI), 391–522 (QDNH…NKEG), and 669–865 (DNKM…EESE). Composition is skewed to low complexity over residues 7–21 (KNNS…NNNS), 115–126 (QQTQTQTQTQTQ), 140–158 (QSPK…QQPQ), 199–210 (DNVNDSSSSSSS), and 401–411 (SKNNNNNNNNK). Basic and acidic residues-rich tracts occupy residues 412 to 439 (DSIK…KQEE) and 448 to 489 (NNEK…KGDD). Low complexity-rich tracts occupy residues 508–521 (EGNN…NNKE) and 677–696 (RSNT…PKST). 3 stretches are compositionally biased toward basic and acidic residues: residues 697-713 (QPKE…EPRP), 757-766 (QNKEIDESLK), and 773-786 (MEKD…KNEE). Acidic residues-rich tracts occupy residues 800–820 (DYDD…DFDG) and 839–865 (EDSE…EESE).

This sequence belongs to the TFIIIC subunit 5 family. Part of the TFIIIC complex.

Its subcellular location is the nucleus. Functionally, involved in RNA polymerase III-mediated transcription. Integral, tightly associated component of the DNA-binding TFIIIC2 subcomplex that directly binds tRNA and virus-associated RNA promoters. The chain is General transcription factor 3C polypeptide 5 (gtf3c5) from Dictyostelium discoideum (Social amoeba).